A 498-amino-acid chain; its full sequence is Hexokinase-3 (498 aa).

The chain crosses the membrane as a helical span at residues 4-24; that stretch reads VAVAFAAVAVVAACSVAAVMV. A Hexokinase domain is found at 35-494; it reads RTVVEILKEL…SSIGSALLVA (460 aa). The tract at residues 90–227 is hexokinase small subdomain; sequence TGREKGTYYA…GLDMHVAALV (138 aa). Residues glycine 104 and threonine 105 each contribute to the ADP site. The D-glucose site is built by threonine 193, lysine 194, asparagine 228, and aspartate 229. The interval 228–483 is hexokinase large subdomain; sequence NDTVGALSLG…QYVVVKAMED (256 aa). Position 252 (threonine 252) interacts with ADP. The D-glucose site is built by asparagine 255, glutamate 283, and glutamate 314. Glycine 448 contributes to the ADP binding site.

This sequence belongs to the hexokinase family. As to expression, expressed in roots, emerging lateral roots, vascular tissues of cotyledons, roots and leaves, root and shoot meristems, anther filaments and funiculi of mature seeds.

The protein localises to the mitochondrion outer membrane. The catalysed reaction is a D-hexose + ATP = a D-hexose 6-phosphate + ADP + H(+). The enzyme catalyses D-fructose + ATP = D-fructose 6-phosphate + ADP + H(+). It catalyses the reaction D-glucose + ATP = D-glucose 6-phosphate + ADP + H(+). Its pathway is carbohydrate metabolism; hexose metabolism. It functions in the pathway carbohydrate degradation; glycolysis; D-glyceraldehyde 3-phosphate and glycerone phosphate from D-glucose: step 1/4. Functionally, fructose and glucose phosphorylating enzyme. May be involved in the phosphorylation of glucose during the export from mitochondrion to cytosol. Plays a role in plant growth and development, perhaps by mediating cross-talk between glucose and hormone response pathways. Involved in root hair cell development by mediating certain aspects of cross talk between glucose and ethylene response pathways. This Arabidopsis thaliana (Mouse-ear cress) protein is Hexokinase-3.